We begin with the raw amino-acid sequence, 373 residues long: NAD-dependent protein deacylase SRT2 (373 aa).

The N-terminal 47 residues, 1–47 (MNMRRVFGGVSTDLFPSRSMYRPLQSGGNLVMLFKGCRRFVRTTCRV), are a transit peptide targeting the mitochondrion. Residues 75 to 373 (DPPNMEDIHK…DVGSLSVPAL (299 aa)) enclose the Deacetylase sirtuin-type domain. NAD(+)-binding positions include 100–120 (GAGV…GAYS) and 179–182 (QNVD). Catalysis depends on histidine 196, which acts as the Proton acceptor. The Zn(2+) site is built by cysteine 204, cysteine 207, cysteine 271, and cysteine 274. NAD(+)-binding positions include 311–313 (GSS), 337–339 (NIG), and valine 355.

The protein belongs to the sirtuin family. Class II subfamily. In terms of assembly, binds to the promoter region of genes influenced by ethylene. Interacts with ENAP1; this interaction is enhanced in the presence of ethylene. Zn(2+) serves as cofactor.

It is found in the mitochondrion matrix. The protein localises to the nucleus. The enzyme catalyses N(6)-acetyl-L-lysyl-[protein] + NAD(+) + H2O = 2''-O-acetyl-ADP-D-ribose + nicotinamide + L-lysyl-[protein]. Its function is as follows. NAD-dependent protein deacylase. Catalyzes the NAD-dependent hydrolysis of acyl groups from lysine residues. Involved in responses to ethylene leading to the transcriptional repression of some ethylene-responsive genes via the regulation of histone acetylation H3K9Ac. Negatively regulates plant basal defense against plant pathogens, possibly by suppressing salicylic acid biosynthesis. This chain is NAD-dependent protein deacylase SRT2, found in Arabidopsis thaliana (Mouse-ear cress).